The sequence spans 118 residues: Protein BEX4 (118 aa).

Residues 14 to 50 (VEKDKKDKKGGKASKQSEEEPHHLEEVENKKPGGNVR) form a disordered region. Basic and acidic residues predominate over residues 28–44 (KQSEEEPHHLEEVENKK). Positions 30-88 (SEEEPHHLEEVENKKPGGNVRRKVRRLVPNFLWAIPNRHVDRNEGGEDVGRFVVQGTEV) are interaction with SIRT2. The segment at 30–118 (SEEEPHHLEE…DNHYDFCLIP (89 aa)) is interaction with alpha-tubulin. C115 contacts Zn(2+).

The protein belongs to the BEX family. Interacts with alpha-tubulin. Interacts with SIRT2. Post-translationally, ubiquitinated and degraded by the proteasome. In terms of tissue distribution, expressed in both Sertoli and germ cells as well as interstitial area of the testis (at protein level).

It localises to the cytoplasm. The protein resides in the cytoskeleton. The protein localises to the spindle pole. It is found in the nucleus. May play a role in microtubule deacetylation by negatively regulating the SIRT2 deacetylase activity toward alpha-tubulin and thereby participate in the control of cell cycle progression and genomic stability. In absence of reductive stress, acts as a pseudosubstrate for the CRL2(FEM1B) complex: associates with FEM1B via zinc, thereby preventing association between FEM1B and its substrates. The sequence is that of Protein BEX4 from Mus musculus (Mouse).